We begin with the raw amino-acid sequence, 627 residues long: Phosphomethylpyrimidine synthase (627 aa).

A compositionally biased stretch (polar residues) spans 1–21 (MSAQQQKNLSESAQVDQQSVQ). The interval 1–32 (MSAQQQKNLSESAQVDQQSVQPFPRSQKVYVQ) is disordered. Substrate contacts are provided by residues N231, M260, Y289, H325, 345-347 (SRG), 386-389 (DGLR), and E425. H429 provides a ligand contact to Zn(2+). Y452 provides a ligand contact to substrate. H493 contacts Zn(2+). [4Fe-4S] cluster-binding residues include C573, C576, and C581.

Belongs to the ThiC family. In terms of assembly, homodimer. The cofactor is [4Fe-4S] cluster.

It catalyses the reaction 5-amino-1-(5-phospho-beta-D-ribosyl)imidazole + S-adenosyl-L-methionine = 4-amino-2-methyl-5-(phosphooxymethyl)pyrimidine + CO + 5'-deoxyadenosine + formate + L-methionine + 3 H(+). It participates in cofactor biosynthesis; thiamine diphosphate biosynthesis. Functionally, catalyzes the synthesis of the hydroxymethylpyrimidine phosphate (HMP-P) moiety of thiamine from aminoimidazole ribotide (AIR) in a radical S-adenosyl-L-methionine (SAM)-dependent reaction. In Ectopseudomonas mendocina (strain ymp) (Pseudomonas mendocina), this protein is Phosphomethylpyrimidine synthase.